The primary structure comprises 60 residues: Large ribosomal subunit protein uL30 (60 aa).

The protein belongs to the universal ribosomal protein uL30 family. Part of the 50S ribosomal subunit.

This Streptococcus equi subsp. equi (strain 4047) protein is Large ribosomal subunit protein uL30.